Here is a 458-residue protein sequence, read N- to C-terminus: Phosphoglucosamine mutase (458 aa).

Catalysis depends on Ser-106, which acts as the Phosphoserine intermediate. Mg(2+) is bound by residues Ser-106, Asp-247, Asp-249, and Asp-251. Ser-106 carries the phosphoserine modification.

Belongs to the phosphohexose mutase family. It depends on Mg(2+) as a cofactor. In terms of processing, activated by phosphorylation.

The enzyme catalyses alpha-D-glucosamine 1-phosphate = D-glucosamine 6-phosphate. In terms of biological role, catalyzes the conversion of glucosamine-6-phosphate to glucosamine-1-phosphate. The chain is Phosphoglucosamine mutase from Chlamydia trachomatis serovar D (strain ATCC VR-885 / DSM 19411 / UW-3/Cx).